Consider the following 761-residue polypeptide: Ribonucleoside-diphosphate reductase 1 subunit alpha (761 aa).

An ATP-cone domain is found at 5 to 95; that stretch reads LLVTKRDGST…IFHLRKKAYG (91 aa). Residues Lys-9, 15–21, Thr-55, and Lys-91 each bind ATP; that span reads ERINLDK. Position 209 (Thr-209) interacts with GDP. A disulfide bridge connects residues Cys-225 and Cys-462. DTTP-binding positions include 232–234, Arg-262, and Arg-269; that span reads DSL. Lys-283 carries the post-translational modification N6-acetyllysine. GDP is bound at residue Asn-437. Asn-437 acts as the Proton acceptor in catalysis. Cys-439 acts as the Cysteine radical intermediate in catalysis. Residues Glu-441 and 623–625 each bind GDP; that span reads ETS. Glu-441 serves as the catalytic Proton acceptor.

Belongs to the ribonucleoside diphosphate reductase large chain family. As to quaternary structure, tetramer of two alpha (R1) and two beta (R2) subunits. The B1 protein is a dimer of alpha subunits. A radical transfer pathway occurs between 'Tyr-122' of R2 and R1. In terms of processing, binding of the substrate occurs primarily when the active-site cysteines are reduced.

The enzyme catalyses a 2'-deoxyribonucleoside 5'-diphosphate + [thioredoxin]-disulfide + H2O = a ribonucleoside 5'-diphosphate + [thioredoxin]-dithiol. Under complex allosteric control mediated by deoxynucleoside triphosphates and ATP binding to separate specificity and activation sites on the alpha subunit. The type of nucleotide bound at the specificity site determines substrate preference. It seems probable that ATP makes the enzyme reduce CDP and UDP, dGTP favors ADP reduction and dTTP favors GDP reduction. Stimulated by ATP and inhibited by dATP binding to the activity site. In vitro, its activity is increased by dithiothreitol (DTT) or thioredoxins (non-specific). Inhibited by hydroxyurea, leads to dNTP depletion, replication fork arrest and genomic instability. Provides the precursors necessary for DNA synthesis. Catalyzes the biosynthesis of deoxyribonucleotides from the corresponding ribonucleotides. R1 contains the binding sites for both substrates and allosteric effectors and carries out the actual reduction of the ribonucleotide. It also provides redox-active cysteines. This chain is Ribonucleoside-diphosphate reductase 1 subunit alpha (nrdA), found in Escherichia coli (strain K12).